The sequence spans 69 residues: U-Asilidin(12)-Dg3b (69 aa).

A signal peptide spans 1-19; it reads MRFLNIFLFFAVMIAFVSA. A propeptide spanning residues 20 to 33 is cleaved from the precursor; it reads SPVLEEEEIDIEPR. Cystine bridges form between C36-C59, C45-C65, and C49-C67.

It belongs to the asilidin-12 family. In terms of tissue distribution, expressed by the venom gland.

Its subcellular location is the secreted. The recombinant peptide moderately increases Kv11.1/KCNH2/ERG1 currents and shifts the voltage-dependence of the channel activation to hyperpolarised potentials. In vivo, induces neurotoxic effects when injected into insects (tested on L.cuprina and A.domesticus). This chain is U-Asilidin(12)-Dg3b, found in Dolopus genitalis (Giant Australian assassin fly).